The sequence spans 229 residues: MTLDRDLFYFYLTPEEMNAARAYLYSSSTSSIEISNNSKSNNCCNNSSIPSTPNTPITPLKNNNITIVNNKTNDNKINDDKINDNKISDDKNNDDRIVLFEETFFSQLIPSSNSSSIPILETFMNDEEFEFTFDESKPFCPTNSYCTLNQQNNNSQFFTVPSQYVTKSVSIPSHFINNTPISLSNNNNNNNNNNIINNNINKNNNNNSKGFKNILILRKIFTLKKKKKK.

This is an uncharacterized protein from Dictyostelium discoideum (Social amoeba).